A 466-amino-acid chain; its full sequence is Chromosomal replication initiator protein DnaA (466 aa).

A domain I, interacts with DnaA modulators region spans residues methionine 1–threonine 86. Residues threonine 86 to serine 129 are domain II. Residues asparagine 130–alanine 346 form a domain III, AAA+ region region. ATP-binding residues include glycine 174, glycine 176, lysine 177, and threonine 178. Positions asparagine 347–serine 466 are domain IV, binds dsDNA.

Belongs to the DnaA family. Oligomerizes as a right-handed, spiral filament on DNA at oriC.

The protein resides in the cytoplasm. Functionally, plays an essential role in the initiation and regulation of chromosomal replication. ATP-DnaA binds to the origin of replication (oriC) to initiate formation of the DNA replication initiation complex once per cell cycle. Binds the DnaA box (a 9 base pair repeat at the origin) and separates the double-stranded (ds)DNA. Forms a right-handed helical filament on oriC DNA; dsDNA binds to the exterior of the filament while single-stranded (ss)DNA is stabiized in the filament's interior. The ATP-DnaA-oriC complex binds and stabilizes one strand of the AT-rich DNA unwinding element (DUE), permitting loading of DNA polymerase. After initiation quickly degrades to an ADP-DnaA complex that is not apt for DNA replication. Binds acidic phospholipids. This is Chromosomal replication initiator protein DnaA from Salmonella agona (strain SL483).